The following is a 237-amino-acid chain: Phosphoribosylaminoimidazole-succinocarboxamide synthase (237 aa).

This sequence belongs to the SAICAR synthetase family.

The catalysed reaction is 5-amino-1-(5-phospho-D-ribosyl)imidazole-4-carboxylate + L-aspartate + ATP = (2S)-2-[5-amino-1-(5-phospho-beta-D-ribosyl)imidazole-4-carboxamido]succinate + ADP + phosphate + 2 H(+). The protein operates within purine metabolism; IMP biosynthesis via de novo pathway; 5-amino-1-(5-phospho-D-ribosyl)imidazole-4-carboxamide from 5-amino-1-(5-phospho-D-ribosyl)imidazole-4-carboxylate: step 1/2. The protein is Phosphoribosylaminoimidazole-succinocarboxamide synthase of Enterococcus faecalis (strain ATCC 700802 / V583).